A 21-amino-acid chain; its full sequence is Buforin-2 (21 aa).

Lys-21 carries the post-translational modification N6-(2-hydroxyisobutyryl)lysine; alternate.

Belongs to the histone H2A family. In terms of tissue distribution, expressed by the skin glands.

It is found in the secreted. Functionally, antimicrobial peptide with potent activity against some Gram-positive and Gram-negative bacteria. Does not permeabilize membrane, but internalizes into bacterial cells and alter specific gene expression involved in bacterial resistance mechanisms. Has the ability to agglutinate E.coli, and lipid vesicles. Shows a weak hemolytic activity, and is not cytotoxic to monocytes. The polypeptide is Buforin-2 (Sphaenorhynchus lacteus (Orinoco lime treefrog)).